Reading from the N-terminus, the 187-residue chain is RNA pyrophosphohydrolase (187 aa).

Positions 6–149 constitute a Nudix hydrolase domain; it reads GYRANVGIIL…KRQVYRLALT (144 aa). The Nudix box motif lies at 38–59; the sequence is GGIKSGETPTQAMYRELAEETG.

Belongs to the Nudix hydrolase family. RppH subfamily. Requires a divalent metal cation as cofactor.

Its function is as follows. Accelerates the degradation of transcripts by removing pyrophosphate from the 5'-end of triphosphorylated RNA, leading to a more labile monophosphorylated state that can stimulate subsequent ribonuclease cleavage. This is RNA pyrophosphohydrolase from Nitrosomonas eutropha (strain DSM 101675 / C91 / Nm57).